A 466-amino-acid polypeptide reads, in one-letter code: Probable aminotransferase Rv3329 (466 aa).

At lysine 294 the chain carries N6-(pyridoxal phosphate)lysine.

The protein belongs to the class-III pyridoxal-phosphate-dependent aminotransferase family. Requires pyridoxal 5'-phosphate as cofactor.

Probable aminotransferase. The sequence is that of Probable aminotransferase Rv3329 from Mycobacterium tuberculosis (strain ATCC 25618 / H37Rv).